The sequence spans 285 residues: Probable enoyl-CoA hydratase echA12 (285 aa).

It belongs to the enoyl-CoA hydratase/isomerase family.

It catalyses the reaction a (3S)-3-hydroxyacyl-CoA = a (2E)-enoyl-CoA + H2O. The enzyme catalyses a 4-saturated-(3S)-3-hydroxyacyl-CoA = a (3E)-enoyl-CoA + H2O. Its function is as follows. Could possibly oxidize fatty acids using specific components. The protein is Probable enoyl-CoA hydratase echA12 (echA12) of Mycobacterium tuberculosis (strain CDC 1551 / Oshkosh).